The chain runs to 478 residues: NAD(+) hydrolase ThsA (478 aa).

Residues M1–T287 form the Deacetylase sirtuin-type domain. A19, D110, and H148 together coordinate NAD(+). The Proton acceptor role is filled by H148. An SLOG (STALD) domain region spans residues I288–D478. 7 residues coordinate 3'cADPR: G292, S293, L330, R373, K390, G401, and E405.

It belongs to the soluble Thoeris ThsA family. Homotetramer in solution.

It catalyses the reaction NAD(+) + H2O = ADP-D-ribose + nicotinamide + H(+). Its activity is regulated as follows. Activated by 3'cADPR. In terms of biological role, NAD(+) hydrolyzing component (NADase) of the Thoeris antiviral defense system, composed of ThsA and ThsB (maybe AS248_15445). Activated by 3' cyclic ADP-D-ribose (3'cADPR) but not its isomers 2'cADPR, cADPR and very weakly by ADPR; binds 3'cADPR better than 2'cADPR. Upon activation binds and hydrolyzes NAD(+), leading to cell death and inhibition of phage replication. This Enterococcus faecium (Streptococcus faecium) protein is NAD(+) hydrolase ThsA.